We begin with the raw amino-acid sequence, 404 residues long: Chorismate synthase (404 aa).

R47 provides a ligand contact to NADP(+). FMN is bound by residues 156–158 (RSS), 281–282 (NA), G321, 336–340 (KPTST), and R363.

This sequence belongs to the chorismate synthase family. Homotetramer. Requires FMNH2 as cofactor.

The catalysed reaction is 5-O-(1-carboxyvinyl)-3-phosphoshikimate = chorismate + phosphate. It participates in metabolic intermediate biosynthesis; chorismate biosynthesis; chorismate from D-erythrose 4-phosphate and phosphoenolpyruvate: step 7/7. Catalyzes the anti-1,4-elimination of the C-3 phosphate and the C-6 proR hydrogen from 5-enolpyruvylshikimate-3-phosphate (EPSP) to yield chorismate, which is the branch point compound that serves as the starting substrate for the three terminal pathways of aromatic amino acid biosynthesis. This reaction introduces a second double bond into the aromatic ring system. The sequence is that of Chorismate synthase from Rhodopirellula baltica (strain DSM 10527 / NCIMB 13988 / SH1).